Consider the following 338-residue polypeptide: RNA 3'-terminal phosphate cyclase (338 aa).

ATP-binding positions include Gln-103 and 283-287 (YLADQ). Catalysis depends on His-308, which acts as the Tele-AMP-histidine intermediate.

Belongs to the RNA 3'-terminal cyclase family. Type 1 subfamily.

It is found in the cytoplasm. It catalyses the reaction a 3'-end 3'-phospho-ribonucleotide-RNA + ATP = a 3'-end 2',3'-cyclophospho-ribonucleotide-RNA + AMP + diphosphate. In terms of biological role, catalyzes the conversion of 3'-phosphate to a 2',3'-cyclic phosphodiester at the end of RNA. The mechanism of action of the enzyme occurs in 3 steps: (A) adenylation of the enzyme by ATP; (B) transfer of adenylate to an RNA-N3'P to produce RNA-N3'PP5'A; (C) and attack of the adjacent 2'-hydroxyl on the 3'-phosphorus in the diester linkage to produce the cyclic end product. The biological role of this enzyme is unknown but it is likely to function in some aspects of cellular RNA processing. In Escherichia coli O7:K1 (strain IAI39 / ExPEC), this protein is RNA 3'-terminal phosphate cyclase.